A 200-amino-acid polypeptide reads, in one-letter code: Recombination protein RecR (200 aa).

Residues 57 to 72 (CRQCRTLTEEELCPQC) form a C4-type zinc finger. The 96-residue stretch at 80 to 175 (TLLCVVEGPM…ITSRIAHGVP (96 aa)) folds into the Toprim domain.

This sequence belongs to the RecR family.

Functionally, may play a role in DNA repair. It seems to be involved in an RecBC-independent recombinational process of DNA repair. It may act with RecF and RecO. This Pseudomonas fluorescens (strain SBW25) protein is Recombination protein RecR.